The chain runs to 1362 residues: DNA-directed RNA polymerase subunit beta' (1362 aa).

Positions 1-14 (MTSSSKSRKSKSSK) are enriched in basic residues. Residues 1-39 (MTSSSKSRKSKSSKASKAAKEAPVSASRPLSKTPPPFRN) are disordered. Positions 15 to 27 (ASKAAKEAPVSAS) are enriched in low complexity. Zn(2+)-binding residues include cysteine 248, cysteine 315, cysteine 322, and cysteine 325. Residues 1316–1336 (TRHNIDPSASNFAAFTRPDAD) are disordered.

Belongs to the RNA polymerase beta' chain family. RpoC2 subfamily. In cyanobacteria the RNAP catalytic core is composed of 2 alpha, 1 beta, 1 beta', 1 gamma and 1 omega subunit. When a sigma factor is associated with the core the holoenzyme is formed, which can initiate transcription. Zn(2+) is required as a cofactor.

It carries out the reaction RNA(n) + a ribonucleoside 5'-triphosphate = RNA(n+1) + diphosphate. Functionally, DNA-dependent RNA polymerase catalyzes the transcription of DNA into RNA using the four ribonucleoside triphosphates as substrates. The protein is DNA-directed RNA polymerase subunit beta' of Synechococcus sp. (strain CC9605).